The primary structure comprises 983 residues: Importin beta-like protein kap113 (983 aa).

Residues 24–96 (AEGHLNNWKK…RCNALLGSIK (73 aa)) enclose the Importin N-terminal domain.

It belongs to the importin beta family.

Its subcellular location is the nucleus. Functions as a component of the nuclear pore complex (NPC). NPC components, collectively referred to as nucleoporins (NUPs), can play the role of both NPC structural components and of docking or interaction partners for transiently associated nuclear transport factors. Active directional transport is assured by both, a Phe-Gly (FG) repeat affinity gradient for these transport factors across the NPC and a transport cofactor concentration gradient across the nuclear envelope. Involved in the export of mRNA from the nucleus to the cytoplasm. May play a role in mitotic spindle formation and/or function. This chain is Importin beta-like protein kap113 (kap113), found in Schizosaccharomyces pombe (strain 972 / ATCC 24843) (Fission yeast).